Here is a 147-residue protein sequence, read N- to C-terminus: MVHFTAEEKAAVTSLWSKMNVEEAGGEALGRLLIVYPWTQRFFDSFGNLSSPSAILGNPKVKAHGKKVLTSFGDAIKNMDNLKPAFAKLSELHCDKLHVDPENFKLLGNVMVIILATHFGKEFTPEVQAAWQKLVSAVAIALAHKYH.

The Globin domain maps to 3-147; sequence HFTAEEKAAV…VAIALAHKYH (145 aa). A phosphoserine mark is found at S14 and S51. Positions 64 and 93 each coordinate heme b.

Belongs to the globin family. Heterotetramer of two alpha chains and two epsilon chains in early embryonic hemoglobin Gower-2; two zeta chains and two epsilon chains in early embryonic hemoglobin Gower-1. In terms of tissue distribution, red blood cells.

The epsilon chain is a beta-type chain of early mammalian embryonic hemoglobin. This is Hemoglobin subunit epsilon (HBE1) from Pan paniscus (Pygmy chimpanzee).